A 460-amino-acid chain; its full sequence is Elongation factor 1-alpha 3 (460 aa).

The 238-residue stretch at 6 to 243 folds into the tr-type G domain; sequence KTHINIVVIG…DCIIPPQRPT (238 aa). The G1 stretch occupies residues 15–22; that stretch reads GHVDSGKS. The interval 71 to 75 is G2; it reads GITID. A G3 region spans residues 92 to 95; that stretch reads DAPG. Positions 154 to 157 are G4; it reads NKMD. The tract at residues 195 to 197 is G5; it reads SGF. 5-glutamyl glycerylphosphorylethanolamine is present on residues glutamate 302 and glutamate 375.

Belongs to the TRAFAC class translation factor GTPase superfamily. Classic translation factor GTPase family. EF-Tu/EF-1A subfamily.

The protein resides in the cytoplasm. Functionally, this protein promotes the GTP-dependent binding of aminoacyl-tRNA to the A-site of ribosomes during protein biosynthesis. The sequence is that of Elongation factor 1-alpha 3 (eft-3) from Oscheius tipulae.